Here is a 437-residue protein sequence, read N- to C-terminus: Putative ankyrin repeat protein FPV014 (437 aa).

ANK repeat units lie at residues 32–61, 65–94, 99–128, 131–160, 164–195, 197–226, and 230–259; these read YGCSLLHCAVENGNTEIARILLLEGANPDL, STPTALHRAVILRHYDIVNLLMEFNVDPDN, ESRTPLEYAVKLNDVKMTKTLLDYGADAED, RFNCPINDAAANGNLEICKLLIDAGARINS, GSVYTIHHAIRSGNYELVVELLSRGALPDVED, LSFSSLHHAVMEGSADMVLTLLEHGASVDV, and CGRTPLFLAANASELDIVKVLLDFWADTSV.

This chain is Putative ankyrin repeat protein FPV014, found in Fowlpox virus (strain NVSL) (FPV).